A 391-amino-acid polypeptide reads, in one-letter code: Elongation factor Tu 1 (391 aa).

One can recognise a tr-type G domain in the interval 10-201 (KPHVNIGTIG…AVDSYIPTPE (192 aa)). The segment at 19–26 (GHVDHGKT) is G1. 19–26 (GHVDHGKT) serves as a coordination point for GTP. Thr-26 is a binding site for Mg(2+). The interval 55 to 59 (GITIS) is G2. The segment at 76–79 (DCPG) is G3. GTP-binding positions include 76-80 (DCPGH) and 131-134 (NKVD). Positions 131–134 (NKVD) are G4. Residues 169–171 (SAL) form a G5 region.

It belongs to the TRAFAC class translation factor GTPase superfamily. Classic translation factor GTPase family. EF-Tu/EF-1A subfamily. As to quaternary structure, monomer.

Its subcellular location is the cytoplasm. It catalyses the reaction GTP + H2O = GDP + phosphate + H(+). Its function is as follows. GTP hydrolase that promotes the GTP-dependent binding of aminoacyl-tRNA to the A-site of ribosomes during protein biosynthesis. The sequence is that of Elongation factor Tu 1 from Rhizobium etli (strain ATCC 51251 / DSM 11541 / JCM 21823 / NBRC 15573 / CFN 42).